The sequence spans 341 residues: Glucokinase (341 aa).

18-23 (GDIGGT) is an ATP binding site.

Belongs to the bacterial glucokinase family.

The protein localises to the cytoplasm. The catalysed reaction is D-glucose + ATP = D-glucose 6-phosphate + ADP + H(+). The polypeptide is Glucokinase (Mesorhizobium japonicum (strain LMG 29417 / CECT 9101 / MAFF 303099) (Mesorhizobium loti (strain MAFF 303099))).